We begin with the raw amino-acid sequence, 181 residues long: Protein Ves (181 aa).

This sequence belongs to the Ves family.

This chain is Protein Ves, found in Cronobacter sakazakii (strain ATCC BAA-894) (Enterobacter sakazakii).